Reading from the N-terminus, the 297-residue chain is Small ribosomal subunit protein uS9m (297 aa).

The segment at 278–297 is disordered; the sequence is VERKKPGKRKARKMPTWVKR.

The protein belongs to the universal ribosomal protein uS9 family.

It is found in the mitochondrion. This is Small ribosomal subunit protein uS9m (MRPS9) from Kluyveromyces lactis (strain ATCC 8585 / CBS 2359 / DSM 70799 / NBRC 1267 / NRRL Y-1140 / WM37) (Yeast).